The chain runs to 440 residues: MSEMTPREIVHELDAHIIGQKKAKRSVAVALRNRWRRMQLDADFRQEVTPKNILMIGPTGVGKTEIARRLAKLANAPFIKVEATKFTEVGYVGKEVEQIIRDLTDIAIKLTREQQMGKCRQRAEEHAEERILDALLPKPKNDWDDSDSNSNTRQIFRKKLRESQLDDKEIDIDVAQPQIGIEIMSPPGMEEMTNQLQSLFKNMGQAPAKRRKMKIKEAFKLLIEEEAAKLVNQEDLKEQAIELVEQNGIVFLDEIDKICKRGETSGPDVSREGVQRDLLPLVEGCTVTTKHGMVKTDHILFIASGAFQMSKPSDLIPELQGRLPIRVELDALTADDFKRILTEPHASLTEQYIALMATEGVIIEFTESGIESIAKAAWQVNERTENIGARRLHTVMEKLMEDISYEASDKSGSSFVIDADYVSAHLDNLVQDEDLSRFIL.

Residues isoleucine 18, 60 to 65, aspartate 253, glutamate 318, and arginine 390 each bind ATP; that span reads GVGKTE.

This sequence belongs to the ClpX chaperone family. HslU subfamily. A double ring-shaped homohexamer of HslV is capped on each side by a ring-shaped HslU homohexamer. The assembly of the HslU/HslV complex is dependent on binding of ATP.

It localises to the cytoplasm. Functionally, ATPase subunit of a proteasome-like degradation complex; this subunit has chaperone activity. The binding of ATP and its subsequent hydrolysis by HslU are essential for unfolding of protein substrates subsequently hydrolyzed by HslV. HslU recognizes the N-terminal part of its protein substrates and unfolds these before they are guided to HslV for hydrolysis. This is ATP-dependent protease ATPase subunit HslU from Shewanella oneidensis (strain ATCC 700550 / JCM 31522 / CIP 106686 / LMG 19005 / NCIMB 14063 / MR-1).